The sequence spans 251 residues: Elongator complex protein 6 (251 aa).

This sequence belongs to the ELP6 family. Component of the elongator complex composed of Elp1, Elp2, Elp3, Elp4, Elp5 and Elp6. The elongator complex associates with and stabilizes microtubules; efficient interaction requires the full complex. Interacts with InR/Insulin-like receptor; the interaction may stabilize Elp6.

The protein resides in the cytoplasm. The protein localises to the nucleus. It localises to the cytoskeleton. It is found in the spindle. Its pathway is tRNA modification; 5-methoxycarbonylmethyl-2-thiouridine-tRNA biosynthesis. In terms of biological role, component of the elongator complex, which is required for multiple tRNA modifications, including mcm5U (5-methoxycarbonylmethyl uridine), mcm5s2U (5-methoxycarbonylmethyl-2-thiouridine), and ncm5U (5-carbamoylmethyl uridine). The elongator complex catalyzes formation of carboxymethyluridine in the wobble base at position 34 in tRNAs. Binding by the elongator complex stabilizes microtubules and promotes their growth. This induces central spindle asymmetry, promoting polarized signaling endosome trafficking during asymmetric cell division and cell fate assignation of sensory organ precursor cells. Required in germ line cells for microtubule organization involved in oocyte polarization and chromosome organization. Involved in InR-TOR (insulin-like receptor-target of rapamycin) signaling regulation of cellular metabolism, autophagy and apoptosis. This is Elongator complex protein 6 from Drosophila melanogaster (Fruit fly).